An 85-amino-acid chain; its full sequence is ATP synthase subunit c (85 aa).

The next 2 membrane-spanning stretches (helical) occupy residues 10 to 30 and 53 to 73; these read IAVGIIVGLASLGTAIGFAIL and FIIAGLLDAVPMIGIVIALLF.

This sequence belongs to the ATPase C chain family. In terms of assembly, F-type ATPases have 2 components, F(1) - the catalytic core - and F(0) - the membrane proton channel. F(1) has five subunits: alpha(3), beta(3), gamma(1), delta(1), epsilon(1). F(0) has three main subunits: a(1), b(2) and c(10-14). The alpha and beta chains form an alternating ring which encloses part of the gamma chain. F(1) is attached to F(0) by a central stalk formed by the gamma and epsilon chains, while a peripheral stalk is formed by the delta and b chains.

The protein resides in the cell inner membrane. F(1)F(0) ATP synthase produces ATP from ADP in the presence of a proton or sodium gradient. F-type ATPases consist of two structural domains, F(1) containing the extramembraneous catalytic core and F(0) containing the membrane proton channel, linked together by a central stalk and a peripheral stalk. During catalysis, ATP synthesis in the catalytic domain of F(1) is coupled via a rotary mechanism of the central stalk subunits to proton translocation. Functionally, key component of the F(0) channel; it plays a direct role in translocation across the membrane. A homomeric c-ring of between 10-14 subunits forms the central stalk rotor element with the F(1) delta and epsilon subunits. This chain is ATP synthase subunit c, found in Aliivibrio salmonicida (strain LFI1238) (Vibrio salmonicida (strain LFI1238)).